A 120-amino-acid chain; its full sequence is Ribosome-binding factor A (120 aa).

Belongs to the RbfA family. In terms of assembly, monomer. Binds 30S ribosomal subunits, but not 50S ribosomal subunits or 70S ribosomes.

The protein resides in the cytoplasm. In terms of biological role, one of several proteins that assist in the late maturation steps of the functional core of the 30S ribosomal subunit. Associates with free 30S ribosomal subunits (but not with 30S subunits that are part of 70S ribosomes or polysomes). Required for efficient processing of 16S rRNA. May interact with the 5'-terminal helix region of 16S rRNA. The chain is Ribosome-binding factor A from Borreliella burgdorferi (strain ATCC 35210 / DSM 4680 / CIP 102532 / B31) (Borrelia burgdorferi).